The following is a 360-amino-acid chain: Peptide chain release factor 1 (360 aa).

The residue at position 237 (glutamine 237) is an N5-methylglutamine.

This sequence belongs to the prokaryotic/mitochondrial release factor family. In terms of processing, methylated by PrmC. Methylation increases the termination efficiency of RF1.

The protein localises to the cytoplasm. In terms of biological role, peptide chain release factor 1 directs the termination of translation in response to the peptide chain termination codons UAG and UAA. The chain is Peptide chain release factor 1 from Nitrosococcus oceani (strain ATCC 19707 / BCRC 17464 / JCM 30415 / NCIMB 11848 / C-107).